Reading from the N-terminus, the 141-residue chain is Large ribosomal subunit protein uL11 (141 aa).

Belongs to the universal ribosomal protein uL11 family. Part of the ribosomal stalk of the 50S ribosomal subunit. Interacts with L10 and the large rRNA to form the base of the stalk. L10 forms an elongated spine to which L12 dimers bind in a sequential fashion forming a multimeric L10(L12)X complex. Post-translationally, one or more lysine residues are methylated.

In terms of biological role, forms part of the ribosomal stalk which helps the ribosome interact with GTP-bound translation factors. The chain is Large ribosomal subunit protein uL11 from Helicobacter acinonychis (strain Sheeba).